We begin with the raw amino-acid sequence, 708 residues long: ATP-dependent RNA helicase laf-1 (708 aa).

Positions 1-21 are enriched in low complexity; the sequence is MESNQSNNGGSGNAALNRGGR. The tract at residues 1 to 191 is disordered; it reads MESNQSNNGG…RGTSKWENRG (191 aa). The span at 48 to 70 shows a compositional bias: gly residues; the sequence is GAGGGGYRRGGGNSGGGGGGGYD. 2 stretches are compositionally biased toward basic and acidic residues: residues 72–83 and 90–99; these read GYNDNRDDRDNR and GRDRNYEDRG. The segment covering 100-123 has biased composition (gly residues); it reads YNGGGGGGGNRGYNNNRGGGGGGY. Positions 231 to 259 match the Q motif motif; it reads SLFSDLSLHEWIEENIKTAGYDRPTPVQK. Residues 262–453 form the Helicase ATP-binding domain; the sequence is IPALQGGRDL…QDFLKENYVF (192 aa). ATP is bound at residue 275–282; the sequence is AQTGSGKT. The short motif at 397–400 is the DEAD box element; it reads DEAD. The region spanning 465 to 626 is the Helicase C-terminal domain; sequence NIMQKIVWVE…ELPDWLEGMS (162 aa). The tract at residues 623–708 is disordered; sequence EGMSGDMRSG…RAQPQQDWWS (86 aa). Gly residues-rich tracts occupy residues 630-647 and 656-692; these read RSGG…GQRF and GGSG…GGGR. Residues 699–708 are compositionally biased toward polar residues; that stretch reads RAQPQQDWWS.

The protein belongs to the DEAD box helicase family. DDX3/DED1 subfamily. In terms of assembly, binds RNA as a monomer at low laf-1 concentrations and as a dimer at high laf-1 concentrations. Expressed in the germline and soma of young adult hermaphrodites.

It localises to the cytoplasm. The protein localises to the cytoplasmic granule. The protein resides in the nucleus. Its subcellular location is the stress granule. It is found in the inflammasome. It localises to the cell membrane. The protein localises to the cell projection. The protein resides in the lamellipodium. The catalysed reaction is ATP + H2O = ADP + phosphate + H(+). In terms of biological role, multifunctional ATP-dependent RNA helicase. Plays a role in RNA remodeling, but is not required for RNA unwinding. Binds to RNA in a concentration-dependent manner to stimulate annealing between two complementary strands of RNA. This process is also dependent upon ATP; ATP reduces binding to RNA and subsequently diminishes RNA annealing. Involved in many cellular processes, which do not necessarily require its ATPase/helicase catalytic activities. Involved in the regulation of transcription and translation initiation. Involved in innate immunity. Involved in both stress and inflammatory responses. Promotes liquid-liquid phase separation of P granules, which is a process important for intracellular organization and stress granule assembly. Required for embryonic development. Plays a role in sexual cell fate determination by negatively regulating the translation of the sex determining protein tra-2. May play a protective role in the response to heat and oxidative stress. May negatively regulate extrinsic apoptotic signaling pathway via death domain receptors. May be involved in mitotic chromosome segregation. The protein is ATP-dependent RNA helicase laf-1 of Caenorhabditis elegans.